Consider the following 679-residue polypeptide: Stress-70 protein, mitochondrial (679 aa).

A mitochondrion-targeting transit peptide spans 1 to 46 (MISASRAAAARLVGTAASRSPAAARPQDGWNGLSHEAFRFVSRRDY). The segment at 1 to 432 (MISASRAAAA…IQGGVLAGDV (432 aa)) is interaction with NFS1. Residues T63 and N64 each contribute to the ADP site. Residues 63–431 (TNSCVAVMEG…AIQGGVLAGD (369 aa)) are nucleotide-binding domain (NBD). K76 carries the N6-acetyllysine modification. Residue T87 is modified to Phosphothreonine. Residues K135 and K138 each carry the N6-acetyllysine; alternate modification. 2 positions are modified to N6-succinyllysine; alternate: K135 and K138. K143 is subject to N6-acetyllysine. K206 carries the post-translational modification N6-acetyllysine; alternate. K206 carries the post-translational modification N6-succinyllysine; alternate. An N6-malonyllysine; alternate modification is found at K206. N6-acetyllysine is present on residues K234 and K288. Residue K300 is modified to N6-acetyllysine; alternate. An N6-succinyllysine; alternate modification is found at K300. 3 residues coordinate ADP: E313, K316, and S320. Position 360 is an N6-acetyllysine; alternate (K360). K360 is subject to N6-succinyllysine; alternate. K368 bears the N6-succinyllysine mark. ADP is bound by residues G388 and R391. K394 carries the post-translational modification N6-succinyllysine. At S408 the chain carries Phosphoserine. The interdomain linker stretch occupies residues 432 to 441 (VTDVLLLDVT). The interaction with FXN and ISCU stretch occupies residues 432 to 679 (VTDVLLLDVT…QKEDQKEEKQ (248 aa)). The tract at residues 442–679 (PLSLGIETLG…QKEDQKEEKQ (238 aa)) is substrate-binding domain (SBD). R513 is modified (omega-N-methylarginine). An N6-acetyllysine; alternate mark is found at K567 and K600. An N6-succinyllysine; alternate mark is found at K567 and K600. The residue at position 610 (K610) is an N6-succinyllysine. An N6-acetyllysine modification is found at K612. N6-acetyllysine; alternate is present on K646. K646 carries the post-translational modification N6-succinyllysine; alternate. A disordered region spans residues 656-679 (ASEREGSGSSGTGEQKEDQKEEKQ). Positions 669–679 (EQKEDQKEEKQ) are enriched in basic and acidic residues.

It belongs to the heat shock protein 70 family. In terms of assembly, interacts strongly with the intermediate form of FXN and weakly with its mature form. Interacts with HSCB. Associates with the mitochondrial contact site and cristae organizing system (MICOS) complex, composed of at least MICOS10/MIC10, CHCHD3/MIC19, CHCHD6/MIC25, APOOL/MIC27, IMMT/MIC60, APOO/MIC23/MIC26 and QIL1/MIC13. This complex was also known under the names MINOS or MitOS complex. The MICOS complex associates with mitochondrial outer membrane proteins SAMM50, MTX1, MTX2 and DNAJC11, mitochondrial inner membrane protein TMEM11 and with HSPA9. Interacts with DNLZ, the interaction is required to prevent self-aggregation. Interacts with TESPA1. Interacts with PDPN. Interacts with NFU1, NFS1 and ISCU. Interacts with TP53; the interaction promotes TP53 degradation. Interacts (via SBD domain) with UBXN2A; the interaction with UBXN2A inhibits HSPA9/MOT-2 interaction with and degradation of TP53, thereby promotes TP53 translocation to the nucleus. Interacts with ITPR1 AND VDAC1; this interaction couples ITPR1 to VDAC1. Component of the TIM23 mitochondrial inner membrane pre-sequence translocase complex.

Its subcellular location is the mitochondrion. It is found in the nucleus. The protein resides in the nucleolus. It localises to the cytoplasm. The protein localises to the mitochondrion matrix. It catalyses the reaction ATP + H2O = ADP + phosphate + H(+). Its activity is regulated as follows. The chaperone activity is regulated by ATP-induced allosteric coupling of the nucleotide-binding (NBD) and substrate-binding (SBD) domains. ATP binding in the NBD leads to a conformational change in the NBD, which is transferred through the interdomain linker (IDL) to the substrate-binding domain (SBD). This elicits a reduced substrate affinity and a faster substrate exchange rate. Upon hydrolysis of ATP to ADP, the protein undergoes a conformational change that increases its affinity for substrate proteins. It cycles through repeated phases of ATP hydrolysis and nucleotide exchange, facilitating repeated cycles of substrate binding and release. Functions in collaboration with co-chaperones. Functions with the co-chaperone, DNLZ, to maintain solubility and regulate ATP hydrolysis. Nucleotide exchange factors, GRPEL1 and GRPEL2, accelerate nucleotide exchange. Its function is as follows. Mitochondrial chaperone that plays a key role in mitochondrial protein import, folding, and assembly. Plays an essential role in the protein quality control system, the correct folding of proteins, the re-folding of misfolded proteins, and the targeting of proteins for subsequent degradation. These processes are achieved through cycles of ATP binding, ATP hydrolysis, and ADP release, mediated by co-chaperones. In mitochondria, it associates with the TIM (translocase of the inner membrane) protein complex to assist in the import and folding of mitochondrial proteins. Plays an important role in mitochondrial iron-sulfur cluster (ISC) biogenesis. Interacts with and stabilizes ISC cluster assembly proteins FXN, NFU1, NFS1 and ISCU. Regulates erythropoiesis via stabilization of ISC assembly. Regulates mitochondrial calcium-dependent apoptosis by coupling two calcium channels, ITPR1 and VDAC1, at the mitochondria-associated endoplasmic reticulum (ER) membrane to facilitate calcium transport from the ER lumen to the mitochondria intermembrane space, providing calcium for the downstream calcium channel MCU, which releases it into the mitochondrial matrix. Although primarily located in the mitochondria, it is also found in other cellular compartments. In the cytosol, it associates with proteins involved in signaling, apoptosis, or senescence. It may play a role in cell cycle regulation via its interaction with and promotion of degradation of TP53. May play a role in the control of cell proliferation and cellular aging. Protects against reactive oxygen species (ROS). Extracellular HSPA9 plays a cytoprotective role by preventing cell lysis following immune attack by the membrane attack complex by disrupting formation of the complex. The chain is Stress-70 protein, mitochondrial from Mus musculus (Mouse).